Reading from the N-terminus, the 393-residue chain is Trehalose import ATP-binding protein SugC (393 aa).

In terms of domain architecture, ABC transporter spans 4-235; sequence IVLDHVNKSY…PANLFVAGFI (232 aa). 37-44 is a binding site for ATP; sequence GPSGCGKT. The short motif at 135 to 139 is the Helical C-loop; LSGGQ motif element; it reads LSGGQ.

It belongs to the ABC transporter superfamily. In terms of assembly, monomer. Homodimerizes in the presence of ATP. The complex is composed of two ATP-binding proteins (SugC), two transmembrane proteins (SugA and SugB) and a solute-binding protein (LpqY).

It is found in the cell inner membrane. The catalysed reaction is alpha,alpha-trehalose(out) + ATP + H2O = alpha,alpha-trehalose(in) + ADP + phosphate + H(+). Part of the ABC transporter complex LpqY-SugA-SugB-SugC, which is highly specific for uptake of trehalose. Involved in the recycling of extracellular trehalose released from trehalose-containing molecules synthesized by M.tuberculosis. Trehalose uptake is essential for virulence. Responsible for energy coupling to the transport system. The sequence is that of Trehalose import ATP-binding protein SugC (sugC) from Mycobacterium tuberculosis (strain CDC 1551 / Oshkosh).